A 558-amino-acid chain; its full sequence is CTP synthase (558 aa).

An amidoligase domain region spans residues 1–267 (MAKFVFVTGG…CLEMLDVLNL (267 aa)). Ser13 serves as a coordination point for CTP. UTP is bound at residue Ser13. Residues 14–19 (SIGKGI) and Asp71 contribute to the ATP site. Mg(2+) contacts are provided by Asp71 and Glu141. CTP-binding positions include 148-150 (DIE), 188-193 (KTKPTQ), and Lys224. Residues 188 to 193 (KTKPTQ) and Lys224 each bind UTP. The Glutamine amidotransferase type-1 domain maps to 292-534 (KVALVGKYVQ…IEAAQLRLPA (243 aa)). L-glutamine is bound at residue Gly354. Cys381 serves as the catalytic Nucleophile; for glutamine hydrolysis. Residues 382 to 385 (LGMQ), Glu405, and Arg462 each bind L-glutamine. Residues His507 and Glu509 contribute to the active site. Positions 536–558 (PDEALRRQSQTNISAQEQPSRIG) are disordered. The segment covering 542 to 558 (RQSQTNISAQEQPSRIG) has biased composition (polar residues).

This sequence belongs to the CTP synthase family. As to quaternary structure, homotetramer.

The catalysed reaction is UTP + L-glutamine + ATP + H2O = CTP + L-glutamate + ADP + phosphate + 2 H(+). It catalyses the reaction L-glutamine + H2O = L-glutamate + NH4(+). The enzyme catalyses UTP + NH4(+) + ATP = CTP + ADP + phosphate + 2 H(+). It participates in pyrimidine metabolism; CTP biosynthesis via de novo pathway; CTP from UDP: step 2/2. Allosterically activated by GTP, when glutamine is the substrate; GTP has no effect on the reaction when ammonia is the substrate. The allosteric effector GTP functions by stabilizing the protein conformation that binds the tetrahedral intermediate(s) formed during glutamine hydrolysis. Inhibited by the product CTP, via allosteric rather than competitive inhibition. Catalyzes the ATP-dependent amination of UTP to CTP with either L-glutamine or ammonia as the source of nitrogen. Regulates intracellular CTP levels through interactions with the four ribonucleotide triphosphates. The polypeptide is CTP synthase (Prochlorococcus marinus (strain MIT 9313)).